A 263-amino-acid chain; its full sequence is Imidazole glycerol phosphate synthase subunit HisF (263 aa).

Catalysis depends on residues aspartate 11 and aspartate 131.

It belongs to the HisA/HisF family. In terms of assembly, heterodimer of HisH and HisF.

It is found in the cytoplasm. The catalysed reaction is 5-[(5-phospho-1-deoxy-D-ribulos-1-ylimino)methylamino]-1-(5-phospho-beta-D-ribosyl)imidazole-4-carboxamide + L-glutamine = D-erythro-1-(imidazol-4-yl)glycerol 3-phosphate + 5-amino-1-(5-phospho-beta-D-ribosyl)imidazole-4-carboxamide + L-glutamate + H(+). It functions in the pathway amino-acid biosynthesis; L-histidine biosynthesis; L-histidine from 5-phospho-alpha-D-ribose 1-diphosphate: step 5/9. IGPS catalyzes the conversion of PRFAR and glutamine to IGP, AICAR and glutamate. The HisF subunit catalyzes the cyclization activity that produces IGP and AICAR from PRFAR using the ammonia provided by the HisH subunit. The polypeptide is Imidazole glycerol phosphate synthase subunit HisF (Deinococcus geothermalis (strain DSM 11300 / CIP 105573 / AG-3a)).